The chain runs to 342 residues: S-adenosylmethionine:tRNA ribosyltransferase-isomerase (342 aa).

Belongs to the QueA family. Monomer.

The protein resides in the cytoplasm. It carries out the reaction 7-aminomethyl-7-carbaguanosine(34) in tRNA + S-adenosyl-L-methionine = epoxyqueuosine(34) in tRNA + adenine + L-methionine + 2 H(+). It functions in the pathway tRNA modification; tRNA-queuosine biosynthesis. Its function is as follows. Transfers and isomerizes the ribose moiety from AdoMet to the 7-aminomethyl group of 7-deazaguanine (preQ1-tRNA) to give epoxyqueuosine (oQ-tRNA). The sequence is that of S-adenosylmethionine:tRNA ribosyltransferase-isomerase from Brevibacillus brevis (strain 47 / JCM 6285 / NBRC 100599).